The chain runs to 497 residues: uncharacterized protein (497 aa).

The next 11 helical transmembrane spans lie at 91–111 (WVGTSFYLGFMVFSLPLSTLL), 119–139 (VTSAFIVAWGILMTLTCLVHS), 149–169 (LLGILESVITPAFVLFIAQWY), 179–199 (AFLVAWNGLGGLIGGSMSYGL), 215–235 (ILFIITGLITIINGVFIFIHI), 283–303 (MYLYFFLQIAVAIPNGGLSNF), 319–339 (LLMNMPTSSISFAALTLFGLI), 347–367 (MDIALVGLAINLTSGSLIAFA), 374–394 (LAGYWLFGISPIPYICILSCI), 406–426 (FMSAVSMIGYCVGNMVGPQTF), and 439–459 (VSFVVCYCVAIFIIIAIYAVN).

The protein belongs to the major facilitator superfamily. Allantoate permease family.

The protein resides in the golgi apparatus. It localises to the membrane. This is an uncharacterized protein from Schizosaccharomyces pombe (strain 972 / ATCC 24843) (Fission yeast).